Reading from the N-terminus, the 1192-residue chain is DNA topoisomerase 2 (1192 aa).

Residues Asn-64, Asn-95, and 142 to 149 each bind ATP; that span reads GTNGVGLK. Mg(2+) is bound by residues Glu-438, Asp-539, and Asp-541. The Topo IIA-type catalytic domain occupies 707–1174; it reads IPNFLDGMTR…PGASVWLEEI (468 aa). Catalysis depends on Tyr-800, which acts as the O-(5'-phospho-DNA)-tyrosine intermediate.

Belongs to the type II topoisomerase family. It depends on Mg(2+) as a cofactor. The cofactor is Mn(2+). Ca(2+) is required as a cofactor.

The protein resides in the host cytoplasm. The enzyme catalyses ATP-dependent breakage, passage and rejoining of double-stranded DNA.. Its function is as follows. Type II topoisomerase. Processively relaxes supercoiled DNA. Displays DNA-supercoiling activity only when associated with the viral histone-like protein. The sequence is that of DNA topoisomerase 2 from African swine fever virus (isolate Tick/South Africa/Pretoriuskop Pr4/1996) (ASFV).